The chain runs to 128 residues: Small ribosomal subunit protein eS8 (128 aa).

Belongs to the eukaryotic ribosomal protein eS8 family. Part of the 30S ribosomal subunit.

In Metallosphaera sedula (strain ATCC 51363 / DSM 5348 / JCM 9185 / NBRC 15509 / TH2), this protein is Small ribosomal subunit protein eS8.